Consider the following 337-residue polypeptide: Ornithine carbamoyltransferase (337 aa).

Residues 57–60, Gln-84, Arg-108, and 135–138 each bind carbamoyl phosphate; these read STRT and HPTQ. L-ornithine-binding positions include Asn-167, Asp-231, and 235–236; that span reads SM. Residues 272-273 and Arg-317 contribute to the carbamoyl phosphate site; that span reads CL.

It belongs to the aspartate/ornithine carbamoyltransferase superfamily. OTCase family.

The protein localises to the cytoplasm. It carries out the reaction carbamoyl phosphate + L-ornithine = L-citrulline + phosphate + H(+). The protein operates within amino-acid degradation; L-arginine degradation via ADI pathway; carbamoyl phosphate from L-arginine: step 2/2. In terms of biological role, reversibly catalyzes the transfer of the carbamoyl group from carbamoyl phosphate (CP) to the N(epsilon) atom of ornithine (ORN) to produce L-citrulline. This chain is Ornithine carbamoyltransferase, found in Streptococcus equi subsp. equi (strain 4047).